The chain runs to 324 residues: Probable fructokinase-5 (324 aa).

The protein belongs to the carbohydrate kinase PfkB family.

It catalyses the reaction D-fructose + ATP = D-fructose 6-phosphate + ADP + H(+). The protein operates within glycan biosynthesis; starch biosynthesis. Functionally, may play an important role in maintaining the flux of carbon towards starch formation. The sequence is that of Probable fructokinase-5 from Arabidopsis thaliana (Mouse-ear cress).